Here is a 410-residue protein sequence, read N- to C-terminus: Multidrug resistance protein MdtM (410 aa).

The Cytoplasmic portion of the chain corresponds to 1–11 (MPRFFTRHAAT). The helical transmembrane segment at 12-32 (LFFPMALILYDFAAYLSTDLI) threads the bilayer. At 33–48 (QPGIINVVRDFNADVS) the chain is on the periplasmic side. A helical transmembrane segment spans residues 49-69 (LAPAAVSLYLAGGMALQWLLG). Topologically, residues 70-78 (PLSDRIGRR) are cytoplasmic. The chain crosses the membrane as a helical span at residues 79–99 (PVLITGALIFTLACAATMFTT). The Periplasmic portion of the chain corresponds to 100-103 (SMTQ). Residues 104-124 (FLIARAIQGTSICFIATVGYV) form a helical membrane-spanning segment. The Cytoplasmic segment spans residues 125 to 140 (TVQEAFGQTKGIKLMA). The helical transmembrane segment at 141–161 (IITSIVLIAPIIGPLSGAALM) threads the bilayer. At 162–167 (HFMHWK) the chain is on the periplasmic side. Residues 168 to 188 (VLFAIIAVMGFISFVGLLLAM) traverse the membrane as a helical segment. The Cytoplasmic portion of the chain corresponds to 189 to 216 (PETVKRGAVPFSAKSVLRDFRNVFCNRL). A helical membrane pass occupies residues 217–237 (FLFGAATISLSYIPMMSWVAV). The Periplasmic segment spans residues 238-251 (SPVILIDAGSLTTS). The helical transmembrane segment at 252–272 (QFAWTQVPVFGAVIVANAIVA) threads the bilayer. Topologically, residues 273–282 (RFVKDPTEPR) are cytoplasmic. A helical membrane pass occupies residues 283–303 (FIWRAVPIQLVGLSLLIVGNL). The Periplasmic segment spans residues 304 to 307 (LSPH). A helical membrane pass occupies residues 308–328 (VWLWSVLGTSLYAFGIGLIFP). Topologically, residues 329 to 348 (TLFRFTLFSNKLPKGTVSAS) are cytoplasmic. Residues 349–369 (LNMVILMVMSVSVEIGRWLWF) form a helical membrane-spanning segment. Residues 370–373 (NGGR) lie on the Periplasmic side of the membrane. A helical transmembrane segment spans residues 374-394 (LPFHLLAVVAGVIVVFTLAGL). Residues 395–410 (LNRVRQHQAAELVEEQ) lie on the Cytoplasmic side of the membrane.

The protein belongs to the major facilitator superfamily. As to quaternary structure, monomer.

It localises to the cell inner membrane. The enzyme catalyses Na(+)(in) + 2 H(+)(out) = Na(+)(out) + 2 H(+)(in). It catalyses the reaction K(+)(in) + H(+)(out) = K(+)(out) + H(+)(in). Its activity is regulated as follows. Efflux is inhibited by the ionophore carbonyl cyanide 3-chlorophenylhydrazone (CCCP). Its function is as follows. Proton-dependent efflux pump. Confers resistance to a broad spectrum of chemically unrelated substrates. Overexpression confers resistance to acriflavine, chloramphenicol, norfloxacin, ethidium bromide and tetraphenylphosphonium bromide (TPP). Can also export a broad range of quaternary ammonium compounds (QACs) and contribute to the intrinsic resistance of E.coli to these antimicrobial compounds. In addition to its role in multidrug resistance, MdtM likely plays a physiological role in alkaline pH homeostasis and in resistance to bile salts. May function in alkaline pH homeostasis when millimolar concentrations of sodium or potassium are present in the growth medium. When overexpressed, can confer a tolerance to alkaline pH values up to 9.75. Probably acts as a low-affinity antiporter that catalyzes the exchange of internal Na(+) and K(+) cations for extracellular protons to maintain a stable internal pH, acid relative to outside, during exposure to alkaline environments. Can also catalyze Rb(+)/H(+) and Li(+)/H(+) antiport, but not Ca(2+)/H(+) exchange. The exact stoichiometry of antiport is unknown. Finally, it could contribute to bile salt resistance by catalyzing the transport of bile salts out of the cell cytoplasm. Mediates a bile salt/H(+) exchange driven by the electrochemical gradient. Binds to cholate and deoxycholate with micromolar affinity and catalyzes both cholate/H(+) and deoxycholate/H(+) exchange reactions. This chain is Multidrug resistance protein MdtM, found in Escherichia coli (strain K12).